Here is a 490-residue protein sequence, read N- to C-terminus: GTPase Der (490 aa).

The region spanning P3–D166 is the EngA-type G 1 domain. GTP is bound by residues G9–S16, D56–I60, and N118–D121. The segment at K164–S191 is disordered. The span at D166 to G181 shows a compositional bias: acidic residues. The span at E182–S191 shows a compositional bias: basic and acidic residues. Residues I196–V369 form the EngA-type G 2 domain. GTP contacts are provided by residues G202–S209, D249–V253, and N314–D317. The KH-like domain maps to T370–E454. Positions G452–R490 are disordered. Over residues N470–R490 the composition is skewed to basic residues.

This sequence belongs to the TRAFAC class TrmE-Era-EngA-EngB-Septin-like GTPase superfamily. EngA (Der) GTPase family. Associates with the 50S ribosomal subunit.

GTPase that plays an essential role in the late steps of ribosome biogenesis. The protein is GTPase Der of Pseudomonas fluorescens (strain ATCC BAA-477 / NRRL B-23932 / Pf-5).